The sequence spans 63 residues: Small ribosomal subunit protein eS27 (63 aa).

Zn(2+) contacts are provided by cysteine 18, cysteine 21, cysteine 37, and cysteine 40. The C4-type zinc-finger motif lies at 18–40; sequence CLDCGNQQVVFDRAASYVQCIIC.

The protein belongs to the eukaryotic ribosomal protein eS27 family. Part of the 30S ribosomal subunit. Zn(2+) is required as a cofactor.

This is Small ribosomal subunit protein eS27 from Methanothermobacter thermautotrophicus (strain ATCC 29096 / DSM 1053 / JCM 10044 / NBRC 100330 / Delta H) (Methanobacterium thermoautotrophicum).